The sequence spans 587 residues: Bifunctional lycopene cyclase/phytoene synthase (587 aa).

Positions 1–242 (MGYDYALVHV…IVFGIAAFDK (242 aa)) are lycopene beta-cyclase. 7 helical membrane passes run 8–28 (VHVK…YPVF), 35–55 (RTLF…SYLI), 77–97 (AEEL…YIIL), 120–140 (GKLV…WLIA), 150–170 (LILV…AHFL), 172–192 (ALPL…LWIV), and 220–240 (IEEA…IAAF). Residues 249-587 (AFPEKFDKPA…WVAWSTLMAA (339 aa)) form a phytoene synthase region.

This sequence in the N-terminal section; belongs to the lycopene beta-cyclase family. It in the C-terminal section; belongs to the phytoene/squalene synthase family.

Its subcellular location is the membrane. It catalyses the reaction all-trans-lycopene = gamma-carotene. It carries out the reaction gamma-carotene = all-trans-beta-carotene. The enzyme catalyses 2 (2E,6E,10E)-geranylgeranyl diphosphate = 15-cis-phytoene + 2 diphosphate. Its pathway is carotenoid biosynthesis; beta-carotene biosynthesis. The protein operates within carotenoid biosynthesis; phytoene biosynthesis; all-trans-phytoene from geranylgeranyl diphosphate: step 1/1. Bifunctional enzyme that catalyzes the reactions from geranylgeranyl diphosphate to phytoene (phytoene synthase) and lycopene to beta-carotene via the intermediate gamma-carotene (lycopene cyclase). The chain is Bifunctional lycopene cyclase/phytoene synthase from Colletotrichum graminicola (strain M1.001 / M2 / FGSC 10212) (Maize anthracnose fungus).